The chain runs to 311 residues: Phospho-N-acetylmuramoyl-pentapeptide-transferase (311 aa).

The next 10 helical transmembrane spans lie at 2–22 (ENNV…IEGF), 48–68 (GTPT…LLNF), 74–94 (SFLI…DDFM), 104–124 (ITAV…VYFI), 144–164 (LGWF…NAVN), 168–188 (GVDG…LIVG), 192–212 (VVYL…WHPA), 214–234 (IFMG…SFAL), 237–257 (LELF…SVII), and 288–308 (KIAF…IIGW).

Belongs to the glycosyltransferase 4 family. MraY subfamily. Mg(2+) is required as a cofactor.

The protein resides in the cell inner membrane. It catalyses the reaction UDP-N-acetyl-alpha-D-muramoyl-L-alanyl-gamma-D-glutamyl-meso-2,6-diaminopimeloyl-D-alanyl-D-alanine + di-trans,octa-cis-undecaprenyl phosphate = di-trans,octa-cis-undecaprenyl diphospho-N-acetyl-alpha-D-muramoyl-L-alanyl-D-glutamyl-meso-2,6-diaminopimeloyl-D-alanyl-D-alanine + UMP. It functions in the pathway cell wall biogenesis; peptidoglycan biosynthesis. Catalyzes the initial step of the lipid cycle reactions in the biosynthesis of the cell wall peptidoglycan: transfers peptidoglycan precursor phospho-MurNAc-pentapeptide from UDP-MurNAc-pentapeptide onto the lipid carrier undecaprenyl phosphate, yielding undecaprenyl-pyrophosphoryl-MurNAc-pentapeptide, known as lipid I. This chain is Phospho-N-acetylmuramoyl-pentapeptide-transferase, found in Kosmotoga olearia (strain ATCC BAA-1733 / DSM 21960 / TBF 19.5.1).